The primary structure comprises 328 residues: MKALVRVAVTGAAGQIGYSLLFRIAAGEMFGKDRSVILQMLELPDEKAQAALKGVMMELEDCAFPLLAGMVVTDNPDIAFKDADAALLVGSRPRGPGMERKDLLMENAKIFTAQGAALNKVARRDVKVLVVGNPANTNAYIAMKSAPDLNPKHFTAMLRLDHNRALSQLSTKLSKPVANIEKLIVWGNHSPTMYPDYRFATADGTPIIEAINDQAWNANSFIPTVSKRGAAIIEARGLSSAASAANAAIDHMRDWLLGSNGKWITMGVPSDGSYGIPEGMIFGFPVTTTNGEYSIVKDLPIDTFSKTYIDKTLAELEEERASIAHLLR.

11 to 17 serves as a coordination point for NAD(+); the sequence is GAAGQIG. Substrate-binding residues include arginine 94 and arginine 100. Residues asparagine 107, glutamine 114, and 131 to 133 contribute to the NAD(+) site; that span reads VGN. The substrate site is built by asparagine 133 and arginine 164. The Proton acceptor role is filled by histidine 189.

It belongs to the LDH/MDH superfamily. MDH type 2 family.

It catalyses the reaction (S)-malate + NAD(+) = oxaloacetate + NADH + H(+). Catalyzes the reversible oxidation of malate to oxaloacetate. The protein is Malate dehydrogenase of Xylella fastidiosa (strain M12).